The primary structure comprises 394 residues: NADH-quinone oxidoreductase subunit D 2 (394 aa).

The protein belongs to the complex I 49 kDa subunit family. NDH-1 is composed of 14 different subunits. Subunits NuoB, C, D, E, F, and G constitute the peripheral sector of the complex.

Its subcellular location is the cell membrane. The enzyme catalyses a quinone + NADH + 5 H(+)(in) = a quinol + NAD(+) + 4 H(+)(out). NDH-1 shuttles electrons from NADH, via FMN and iron-sulfur (Fe-S) centers, to quinones in the respiratory chain. The immediate electron acceptor for the enzyme in this species is believed to be a menaquinone. Couples the redox reaction to proton translocation (for every two electrons transferred, four hydrogen ions are translocated across the cytoplasmic membrane), and thus conserves the redox energy in a proton gradient. The protein is NADH-quinone oxidoreductase subunit D 2 of Streptomyces griseus subsp. griseus (strain JCM 4626 / CBS 651.72 / NBRC 13350 / KCC S-0626 / ISP 5235).